The chain runs to 159 residues: MTQLTHINTAGEAHMVDVSAKNETAREARAEAFVDMQAATLAMIIDGSHHKGDVFATARIAGIQAAKKTWELIPLCHPLLLTKVEVKLEAQPEHNRVRIETCCRLTGKTGVEMEALTAASVAALTIYDMCKAVQKDMIIGPVRLLTKSGGKSGDFKVDI.

Residues 75–77 (LCH) and 113–114 (ME) each bind substrate. Asp-128 is an active-site residue.

Belongs to the MoaC family. In terms of assembly, homohexamer; trimer of dimers.

The enzyme catalyses (8S)-3',8-cyclo-7,8-dihydroguanosine 5'-triphosphate = cyclic pyranopterin phosphate + diphosphate. The protein operates within cofactor biosynthesis; molybdopterin biosynthesis. Functionally, catalyzes the conversion of (8S)-3',8-cyclo-7,8-dihydroguanosine 5'-triphosphate to cyclic pyranopterin monophosphate (cPMP). This chain is Cyclic pyranopterin monophosphate synthase, found in Yersinia pseudotuberculosis serotype O:3 (strain YPIII).